A 140-amino-acid chain; its full sequence is PDZ domain-containing protein 11 (140 aa).

The 83-residue stretch at Thr47–Tyr129 folds into the PDZ domain.

It localises to the cytoplasm. The chain is PDZ domain-containing protein 11 (PDZD11) from Gallus gallus (Chicken).